A 400-amino-acid polypeptide reads, in one-letter code: Casein kinase I homolog hhp2 (400 aa).

A Protein kinase domain is found at 12-278 (YRIGRKIGSG…YLRKLFRDLL (267 aa)). Residues 18-26 (IGSGSFGQI) and K41 contribute to the ATP site. The active-site Proton acceptor is D131. The tract at residues 330 to 352 (PNYSSIPLPAERNPKTPQSFSTN) is disordered.

Belongs to the protein kinase superfamily. CK1 Ser/Thr protein kinase family. Casein kinase I subfamily.

Its subcellular location is the nucleus. It carries out the reaction L-seryl-[protein] + ATP = O-phospho-L-seryl-[protein] + ADP + H(+). It catalyses the reaction L-threonyl-[protein] + ATP = O-phospho-L-threonyl-[protein] + ADP + H(+). Its function is as follows. Involved in DNA repair. May regulate the activity of protein(s) involved in double strand break repair caused by gamma rays. This is Casein kinase I homolog hhp2 (hhp2) from Schizosaccharomyces pombe (strain 972 / ATCC 24843) (Fission yeast).